Reading from the N-terminus, the 594-residue chain is Arginine--tRNA ligase (594 aa).

The short motif at 139 to 149 is the 'HIGH' region element; sequence ANPTGPLHVGH.

This sequence belongs to the class-I aminoacyl-tRNA synthetase family. As to quaternary structure, monomer.

The protein localises to the cytoplasm. The enzyme catalyses tRNA(Arg) + L-arginine + ATP = L-arginyl-tRNA(Arg) + AMP + diphosphate. In Burkholderia pseudomallei (strain 1106a), this protein is Arginine--tRNA ligase.